We begin with the raw amino-acid sequence, 266 residues long: Thymidylate synthase (266 aa).

Position 24 (arginine 24) interacts with dUMP. Histidine 54 serves as a coordination point for (6R)-5,10-methylene-5,6,7,8-tetrahydrofolate. 129 to 130 (RR) provides a ligand contact to dUMP. The Nucleophile role is filled by cysteine 149. Residues 169-172 (RSAD), asparagine 180, and 210-212 (HIY) each bind dUMP. Aspartate 172 contacts (6R)-5,10-methylene-5,6,7,8-tetrahydrofolate. Residue alanine 265 coordinates (6R)-5,10-methylene-5,6,7,8-tetrahydrofolate.

It belongs to the thymidylate synthase family. Bacterial-type ThyA subfamily. Homodimer.

Its subcellular location is the cytoplasm. The catalysed reaction is dUMP + (6R)-5,10-methylene-5,6,7,8-tetrahydrofolate = 7,8-dihydrofolate + dTMP. Its pathway is pyrimidine metabolism; dTTP biosynthesis. Functionally, catalyzes the reductive methylation of 2'-deoxyuridine-5'-monophosphate (dUMP) to 2'-deoxythymidine-5'-monophosphate (dTMP) while utilizing 5,10-methylenetetrahydrofolate (mTHF) as the methyl donor and reductant in the reaction, yielding dihydrofolate (DHF) as a by-product. This enzymatic reaction provides an intracellular de novo source of dTMP, an essential precursor for DNA biosynthesis. The protein is Thymidylate synthase of Mycolicibacterium smegmatis (strain ATCC 700084 / mc(2)155) (Mycobacterium smegmatis).